The primary structure comprises 511 residues: UDP-N-acetylmuramoyl-L-alanyl-D-glutamate--2,6-diaminopimelate ligase (511 aa).

Ser-33 lines the UDP-N-acetyl-alpha-D-muramoyl-L-alanyl-D-glutamate pocket. 118–124 (GTNGKTT) lines the ATP pocket. UDP-N-acetyl-alpha-D-muramoyl-L-alanyl-D-glutamate contacts are provided by residues 160 to 161 (TT), Ser-187, Gln-193, and Arg-195. Lys-227 carries the N6-carboxylysine modification. Meso-2,6-diaminopimelate-binding positions include Arg-403, 427–430 (DNPR), Gly-478, and Glu-482. Residues 427-430 (DNPR) carry the Meso-diaminopimelate recognition motif motif.

This sequence belongs to the MurCDEF family. MurE subfamily. Requires Mg(2+) as cofactor. Carboxylation is probably crucial for Mg(2+) binding and, consequently, for the gamma-phosphate positioning of ATP.

The protein localises to the cytoplasm. It carries out the reaction UDP-N-acetyl-alpha-D-muramoyl-L-alanyl-D-glutamate + meso-2,6-diaminopimelate + ATP = UDP-N-acetyl-alpha-D-muramoyl-L-alanyl-gamma-D-glutamyl-meso-2,6-diaminopimelate + ADP + phosphate + H(+). The protein operates within cell wall biogenesis; peptidoglycan biosynthesis. Its function is as follows. Catalyzes the addition of meso-diaminopimelic acid to the nucleotide precursor UDP-N-acetylmuramoyl-L-alanyl-D-glutamate (UMAG) in the biosynthesis of bacterial cell-wall peptidoglycan. The sequence is that of UDP-N-acetylmuramoyl-L-alanyl-D-glutamate--2,6-diaminopimelate ligase from Prochlorococcus marinus subsp. pastoris (strain CCMP1986 / NIES-2087 / MED4).